A 127-amino-acid polypeptide reads, in one-letter code: MVLPQRHRLRGRGVFDYIYQRGQRFQQGLLQLRVADAATNLLREPPETLEGELRFGVVISSKVSKRAVKRNRLRRLLHEAFLRQTFRSDLPPTWLLLNLRPGAVELSDDNLLEEWSTLIQRAGLTDS.

It belongs to the RnpA family. In terms of assembly, consists of a catalytic RNA component (M1 or rnpB) and a protein subunit.

It carries out the reaction Endonucleolytic cleavage of RNA, removing 5'-extranucleotides from tRNA precursor.. RNaseP catalyzes the removal of the 5'-leader sequence from pre-tRNA to produce the mature 5'-terminus. It can also cleave other RNA substrates such as 4.5S RNA. The protein component plays an auxiliary but essential role in vivo by binding to the 5'-leader sequence and broadening the substrate specificity of the ribozyme. The sequence is that of Ribonuclease P protein component from Synechococcus sp. (strain RCC307).